The primary structure comprises 351 residues: MNGTEGPFFYIPMSNATGLVRSPYDYPQYYLVPPWGYACLAAYMFLLILTGFPVNFLTLYVTIEHKKLRSPLNYILLNLAVADLFMVIGGFTTTMWTSLNGYFVFGRMGCNIEGFFATLGGEIALWSLVVLSMERWIVVCKPISNFRFGENHAVMGVAFSWFMAAACAVPPLVGWSRYIPEGMQCSCGIDYYTRAEGFNNESFVIYMFVVHFTCPLTIITFCYGRLVCTVKEAAAQQQESETTQRAEREVTRMVIIMFVAFLACWVPYASVAWYIFTHQGSEFGPVFMTIPAFFAKSSAVYNPVIYICLNKQFRHCMITTLCCGKNPFEEEEGSTTASKTEASSVCSVSPA.

At 1–36 (MNGTEGPFFYIPMSNATGLVRSPYDYPQYYLVPPWG) the chain is on the extracellular side. N-linked (GlcNAc...) asparagine glycosylation is found at N2 and N15. The helical transmembrane segment at 37-61 (YACLAAYMFLLILTGFPVNFLTLYV) threads the bilayer. Residues 62–73 (TIEHKKLRSPLN) lie on the Cytoplasmic side of the membrane. Residues 74–96 (YILLNLAVADLFMVIGGFTTTMW) traverse the membrane as a helical segment. The Extracellular segment spans residues 97–110 (TSLNGYFVFGRMGC). C110 and C187 are joined by a disulfide. Residues 111–133 (NIEGFFATLGGEIALWSLVVLSM) traverse the membrane as a helical segment. The 'Ionic lock' involved in activated form stabilization signature appears at 134-136 (ERW). Over 134–152 (ERWIVVCKPISNFRFGENH) the chain is Cytoplasmic. A helical transmembrane segment spans residues 153 to 173 (AVMGVAFSWFMAAACAVPPLV). At 174–202 (GWSRYIPEGMQCSCGIDYYTRAEGFNNES) the chain is on the extracellular side. N-linked (GlcNAc...) asparagine glycosylation occurs at N200. A helical transmembrane segment spans residues 203-224 (FVIYMFVVHFTCPLTIITFCYG). Residues 225 to 252 (RLVCTVKEAAAQQQESETTQRAEREVTR) are Cytoplasmic-facing. A helical transmembrane segment spans residues 253–274 (MVIIMFVAFLACWVPYASVAWY). The Extracellular segment spans residues 275-286 (IFTHQGSEFGPV). A helical membrane pass occupies residues 287 to 308 (FMTIPAFFAKSSAVYNPVIYIC). K296 is modified (N6-(retinylidene)lysine). At 309 to 351 (LNKQFRHCMITTLCCGKNPFEEEEGSTTASKTEASSVCSVSPA) the chain is on the cytoplasmic side. 2 S-palmitoyl cysteine lipidation sites follow: C322 and C323. Residues 330–351 (EEEGSTTASKTEASSVCSVSPA) are disordered. The span at 334–351 (STTASKTEASSVCSVSPA) shows a compositional bias: polar residues.

It belongs to the G-protein coupled receptor 1 family. Opsin subfamily. Phosphorylated on some or all of the serine and threonine residues present in the C-terminal region. Post-translationally, contains one covalently linked retinal chromophore.

Its subcellular location is the membrane. It localises to the cell projection. The protein resides in the cilium. The protein localises to the photoreceptor outer segment. In terms of biological role, photoreceptor required for image-forming vision at low light intensity. While most salt water fish species use retinal as chromophore, most freshwater fish use 3-dehydroretinal, or a mixture of retinal and 3-dehydroretinal. Light-induced isomerization of 11-cis to all-trans retinal triggers a conformational change that activates signaling via G-proteins. Subsequent receptor phosphorylation mediates displacement of the bound G-protein alpha subunit by arrestin and terminates signaling. The polypeptide is Rhodopsin (rho) (Sardina pilchardus (European pilchard)).